A 281-amino-acid chain; its full sequence is Diphthine methyl ester synthase (281 aa).

Residues Leu-9, Asp-84, Gly-87, 112 to 113 (SI), and Leu-163 each bind S-adenosyl-L-methionine. Ser-171 carries the phosphoserine modification. Val-225 and His-250 together coordinate S-adenosyl-L-methionine.

Belongs to the diphthine synthase family.

The enzyme catalyses 2-[(3S)-amino-3-carboxypropyl]-L-histidyl-[translation elongation factor 2] + 4 S-adenosyl-L-methionine = diphthine methyl ester-[translation elongation factor 2] + 4 S-adenosyl-L-homocysteine + 3 H(+). The protein operates within protein modification; peptidyl-diphthamide biosynthesis. Functionally, S-adenosyl-L-methionine-dependent methyltransferase that catalyzes four methylations of the modified target histidine residue in translation elongation factor 2 (EF-2), to form an intermediate called diphthine methyl ester. The four successive methylation reactions represent the second step of diphthamide biosynthesis. This Mus musculus (Mouse) protein is Diphthine methyl ester synthase (Dph5).